The primary structure comprises 367 residues: UDP-N-acetylglucosamine--N-acetylmuramyl-(pentapeptide) pyrophosphoryl-undecaprenol N-acetylglucosamine transferase (367 aa).

UDP-N-acetyl-alpha-D-glucosamine-binding positions include 15 to 17, Asn127, Arg163, Ser191, Ile249, and Gln294; that span reads TGG.

Belongs to the glycosyltransferase 28 family. MurG subfamily.

It is found in the cell inner membrane. The catalysed reaction is di-trans,octa-cis-undecaprenyl diphospho-N-acetyl-alpha-D-muramoyl-L-alanyl-D-glutamyl-meso-2,6-diaminopimeloyl-D-alanyl-D-alanine + UDP-N-acetyl-alpha-D-glucosamine = di-trans,octa-cis-undecaprenyl diphospho-[N-acetyl-alpha-D-glucosaminyl-(1-&gt;4)]-N-acetyl-alpha-D-muramoyl-L-alanyl-D-glutamyl-meso-2,6-diaminopimeloyl-D-alanyl-D-alanine + UDP + H(+). It functions in the pathway cell wall biogenesis; peptidoglycan biosynthesis. Functionally, cell wall formation. Catalyzes the transfer of a GlcNAc subunit on undecaprenyl-pyrophosphoryl-MurNAc-pentapeptide (lipid intermediate I) to form undecaprenyl-pyrophosphoryl-MurNAc-(pentapeptide)GlcNAc (lipid intermediate II). The sequence is that of UDP-N-acetylglucosamine--N-acetylmuramyl-(pentapeptide) pyrophosphoryl-undecaprenol N-acetylglucosamine transferase from Burkholderia vietnamiensis (strain G4 / LMG 22486) (Burkholderia cepacia (strain R1808)).